The following is a 3414-amino-acid chain: Hemocyanin 1 (3414 aa).

An N-terminal signal peptide occupies residues M1 to A16. E17 is an a divalent metal cation binding site. The tract at residues E17–N437 is functional unit a (wall). H58 is a Cu cation binding site. The cysteines at positions 64 and 73 are disulfide-linked. Residues C74 to H76 constitute a cross-link (2'-(S-cysteinyl)-histidine (Cys-His)). Residues H76, H85, H195, H199, and H226 each contribute to the Cu cation site. C185 and C252 form a disulfide bridge. Positions C287–H290 form a cross-link, 2'-(S-cysteinyl)-histidine (Cys-His). C339 and C351 are disulfide-bonded. Residue N403 is glycosylated (N-linked (GlcNAc...) asparagine). The segment at L438–S851 is functional unit b (wall). Cu cation is bound at residue H478. A disulfide bond links C484 and C495. Residues C496–H498 constitute a cross-link (2'-(S-cysteinyl)-histidine (Cys-His)). Residues H498 and H507 each coordinate Cu cation. N545 is a glycosylation site (N-linked (GlcNAc...) asparagine). The cysteines at positions 608 and 674 are disulfide-linked. Cu cation-binding residues include H618, H622, and H649. The WD 1 repeat unit spans residues S628–P669. E737 is an a divalent metal cation binding site. A functional unit c (wall) region spans residues R852–A1271. H892 contacts Cu cation. C898 and C909 are oxidised to a cystine. Residues C910–H912 constitute a cross-link (2'-(S-cysteinyl)-histidine (Cys-His)). Cu cation contacts are provided by H912, H921, H1031, H1035, and H1062. 2 disulfide bridges follow: C1021–C1088 and C1178–C1184. The WD 2 repeat unit spans residues A1041–P1082. A functional unit d (wall) region spans residues N1272–P1680. H1309 is a Cu cation binding site. C1315 and C1324 are oxidised to a cystine. Positions C1325–H1327 form a cross-link, 2'-(S-cysteinyl)-histidine (Cys-His). H1327, H1336, H1440, H1444, and H1471 together coordinate Cu cation. 2 cysteine pairs are disulfide-bonded: C1430-C1497 and C1585-C1595. Residues K1450–P1491 form a WD 3 repeat. An N-linked (GlcNAc...) asparagine glycan is attached at N1648. The segment at V1681 to L2097 is functional unit e (wall). H1721 contributes to the Cu cation binding site. A disulfide bridge connects residues C1727 and C1738. Positions C1739–H1741 form a cross-link, 2'-(S-cysteinyl)-histidine (Cys-His). Cu cation is bound by residues H1741, H1750, H1863, H1867, and H1894. 2 disulfides stabilise this stretch: C1853–C1920 and C2009–C2015. One copy of the WD 4 repeat lies at K1873–S1914. The interval N2098–G2517 is functional unit f (wall). H2138 lines the Cu cation pocket. Residues C2144 and C2154 are joined by a disulfide bond. The N-linked (GlcNAc...) asparagine glycan is linked to N2145. Residues C2155–H2157 constitute a cross-link (2'-(S-cysteinyl)-histidine (Cys-His)). The Cu cation site is built by H2157, H2166, H2276, H2280, and H2307. The WD 5 repeat unit spans residues P2163–P2199. 2 disulfide bridges follow: C2266–C2333 and C2420–C2426. Residue E2424 participates in a divalent metal cation binding. The functional unit g (internal arc) stretch occupies residues H2518–D2921. H2558 contributes to the Cu cation binding site. Cysteines 2564 and 2574 form a disulfide. N-linked (GlcNAc...) asparagine glycosylation occurs at N2571. The segment at residues C2575–H2577 is a cross-link (2'-(S-cysteinyl)-histidine (Cys-His)). Cu cation-binding residues include H2577, H2586, H2686, H2690, and H2717. 2 disulfides stabilise this stretch: C2676–C2743 and C2830–C2836. The stretch at L2696–P2737 is one WD 6 repeat. Residues I2922–E3414 form a functional unit h (internal slab) region. H2962 lines the Cu cation pocket. C2968 and C2978 form a disulfide bridge. The segment at residues C2979 to H2981 is a cross-link (2'-(S-cysteinyl)-histidine (Cys-His)). Residues H2981, H2990, H3091, H3095, and H3122 each coordinate Cu cation. A disulfide bond links C3081 and C3148. A WD 7 repeat occupies A3101–P3142. A glycan (N-linked (GlcNAc...) asparagine) is linked at N3278. The cysteines at positions 3367 and 3400 are disulfide-linked.

This sequence belongs to the tyrosinase family. Hemocyanin subfamily. In terms of assembly, homo-didecamer, with two decamers assembled face-to-face at their open ends. This didecamer form a stable 25 nM cylinder wall. In terms of processing, probably N-glycosylated. Asn-1280 and Asn-2484 are buried deeply in the protein which make them inaccessible for sugar attachment. Asn-3278 N-glycan is likely to represent a diantennate carbohydrate tree. The didecamer is almost evenly tagged by a total of 120 sugar trees. As to expression, hemolymph.

It is found in the secreted. The protein localises to the extracellular space. Functionally, hemocyanins are copper-containing oxygen carriers occurring freely dissolved in the hemolymph of many mollusks and arthropods. In Megathura crenulata (Giant keyhole limpet), this protein is Hemocyanin 1.